A 368-amino-acid polypeptide reads, in one-letter code: Histidinol-phosphate aminotransferase (368 aa).

Lys229 bears the N6-(pyridoxal phosphate)lysine mark.

Belongs to the class-II pyridoxal-phosphate-dependent aminotransferase family. Histidinol-phosphate aminotransferase subfamily. In terms of assembly, homodimer. Pyridoxal 5'-phosphate serves as cofactor.

The catalysed reaction is L-histidinol phosphate + 2-oxoglutarate = 3-(imidazol-4-yl)-2-oxopropyl phosphate + L-glutamate. The protein operates within amino-acid biosynthesis; L-histidine biosynthesis; L-histidine from 5-phospho-alpha-D-ribose 1-diphosphate: step 7/9. In Acidovorax ebreus (strain TPSY) (Diaphorobacter sp. (strain TPSY)), this protein is Histidinol-phosphate aminotransferase.